A 273-amino-acid polypeptide reads, in one-letter code: Formamidopyrimidine-DNA glycosylase (273 aa).

The active-site Schiff-base intermediate with DNA is the Pro-2. Glu-3 (proton donor) is an active-site residue. The active-site Proton donor; for beta-elimination activity is Lys-57. Positions 91, 110, and 151 each coordinate DNA. The segment at 236 to 270 adopts an FPG-type zinc-finger fold; sequence QVYGRKDEACNDCGTIIEAKVIGQRNSYFCPHCQM. Catalysis depends on Arg-260, which acts as the Proton donor; for delta-elimination activity.

This sequence belongs to the FPG family. Monomer. Zn(2+) is required as a cofactor.

It catalyses the reaction Hydrolysis of DNA containing ring-opened 7-methylguanine residues, releasing 2,6-diamino-4-hydroxy-5-(N-methyl)formamidopyrimidine.. It carries out the reaction 2'-deoxyribonucleotide-(2'-deoxyribose 5'-phosphate)-2'-deoxyribonucleotide-DNA = a 3'-end 2'-deoxyribonucleotide-(2,3-dehydro-2,3-deoxyribose 5'-phosphate)-DNA + a 5'-end 5'-phospho-2'-deoxyribonucleoside-DNA + H(+). Its function is as follows. Involved in base excision repair of DNA damaged by oxidation or by mutagenic agents. Acts as a DNA glycosylase that recognizes and removes damaged bases. Has a preference for oxidized purines, such as 7,8-dihydro-8-oxoguanine (8-oxoG). Has AP (apurinic/apyrimidinic) lyase activity and introduces nicks in the DNA strand. Cleaves the DNA backbone by beta-delta elimination to generate a single-strand break at the site of the removed base with both 3'- and 5'-phosphates. The chain is Formamidopyrimidine-DNA glycosylase from Actinobacillus pleuropneumoniae serotype 5b (strain L20).